The chain runs to 340 residues: uncharacterized protein (340 aa).

Residues 1 to 25 (MLGIRAMLVMLDYYWIQLITNNDTR) form the signal peptide. Residues 26-225 (SNNTDTIFVS…RRYMYLFSVS (200 aa)) are Lumenal-facing. 12 N-linked (GlcNAc...) asparagine; by host glycosylation sites follow: Asn27, Asn54, Asn57, Asn68, Asn72, Asn78, Asn83, Asn107, Asn118, Asn146, Asn173, and Asn180. A helical transmembrane segment spans residues 226–246 (CAGITGTVSIILVSLSLLILI). Topologically, residues 247 to 340 (CYYRCGRLLI…PMHMVVCMPA (94 aa)) are cytoplasmic.

Belongs to the HHV-5 UL20 protein family.

It localises to the host endoplasmic reticulum membrane. This is an uncharacterized protein from Human cytomegalovirus (strain AD169) (HHV-5).